The sequence spans 235 residues: Small ribosomal subunit protein uS2c (235 aa).

The protein belongs to the universal ribosomal protein uS2 family.

It localises to the plastid. It is found in the chloroplast. The protein is Small ribosomal subunit protein uS2c (rps2) of Anthoceros angustus (Hornwort).